The chain runs to 513 residues: Fructose import ATP-binding protein FruK (513 aa).

2 consecutive ABC transporter domains span residues Val8–Ser244 and Pro262–Thr505. Gly40–Ser47 contacts ATP.

Belongs to the ABC transporter superfamily. In terms of assembly, the complex is composed of an ATP-binding protein (FruK), two transmembrane proteins (FruF and FruG) and a solute-binding protein (FruE).

Its subcellular location is the cell membrane. It catalyses the reaction D-fructose(out) + ATP + H2O = D-fructose(in) + ADP + phosphate + H(+). Its function is as follows. Part of the high-affinity ABC transporter complex FruEKFG involved in fructose uptake. Can also transport ribose and xylose, with lower affinity. Probably responsible for energy coupling to the transport system. The sequence is that of Fructose import ATP-binding protein FruK from Bifidobacterium longum (strain NCC 2705).